The sequence spans 1011 residues: Protein FAM83B (1011 aa).

The tract at residues 1 to 283 (METSSMLSSL…RTLYARSCVP (283 aa)) is DUF1669. The required for interaction with RAF1 and for the function stretch occupies residues 1-284 (METSSMLSSL…TLYARSCVPS (284 aa)). 5 positions are modified to phosphoserine: Ser-334, Ser-422, Ser-424, Ser-466, and Ser-543. The segment at 555–585 (EVNSCTTGSSNSTIIGSQGSETPKEVPDTPT) is disordered. A compositionally biased stretch (low complexity) spans 557–574 (NSCTTGSSNSTIIGSQGS). Ser-664 carries the post-translational modification Phosphoserine. 2 disordered regions span residues 691–738 (NRVR…TKSV) and 750–769 (ESNK…SFLK). A compositionally biased stretch (basic and acidic residues) spans 694-705 (RQPEKPKEDLLK). Composition is skewed to polar residues over residues 706-715 (SSKSMHNVTH) and 727-738 (RNSPSGTTTKSV). Positions 750 to 762 (ESNKELASKKEVK) are enriched in basic and acidic residues. Phosphothreonine is present on Thr-782. Ser-802 carries the post-translational modification Phosphoserine. Residues 807 to 928 (LVSEGEENQK…TSSELLRSHS (122 aa)) form a disordered region. The span at 813 to 828 (ENQKPKKSDTKVDSSP) shows a compositional bias: basic and acidic residues. Phosphoserine is present on residues Ser-852, Ser-869, and Ser-915. Positions 913–923 (TSSPRPTSSEL) are enriched in low complexity.

The protein belongs to the FAM83 family. In terms of assembly, interacts with EGFR; positively regulates EGFR inducing its autophosphorylation in absence of stimulation by EGF. Interacts with RAF1; displaces 14-3-3 proteins from RAF1 and activates RAF1 within the RAS/MAPK signaling cascade. Interacts with AKT1, PIK3CA and PIK3R1; activates the PI3K/AKT signaling cascade. Directly interacts (via DUF1669) with casein kinase isoforms CSNK1A1, CSNK1A1L, CSNK1D and CSNK1E. In terms of processing, phosphorylated in vitro by CSNK1A1.

Its subcellular location is the cytoplasm. It localises to the membrane. Probable proto-oncogene that functions in the epidermal growth factor receptor/EGFR signaling pathway. Activates both the EGFR itself and downstream RAS/MAPK and PI3K/AKT/TOR signaling cascades. The polypeptide is Protein FAM83B (Homo sapiens (Human)).